Reading from the N-terminus, the 314-residue chain is DNA-directed RNA polymerase subunit alpha (314 aa).

The segment at 1–228 (MIEIEKPRIE…EHLNIFVGLT (228 aa)) is alpha N-terminal domain (alpha-NTD). The segment at 246–314 (EKVLEMSIEE…DLGLGLRKED (69 aa)) is alpha C-terminal domain (alpha-CTD).

The protein belongs to the RNA polymerase alpha chain family. In terms of assembly, homodimer. The RNAP catalytic core consists of 2 alpha, 1 beta, 1 beta' and 1 omega subunit. When a sigma factor is associated with the core the holoenzyme is formed, which can initiate transcription.

The enzyme catalyses RNA(n) + a ribonucleoside 5'-triphosphate = RNA(n+1) + diphosphate. DNA-dependent RNA polymerase catalyzes the transcription of DNA into RNA using the four ribonucleoside triphosphates as substrates. The sequence is that of DNA-directed RNA polymerase subunit alpha from Staphylococcus aureus (strain Mu3 / ATCC 700698).